Reading from the N-terminus, the 31-residue chain is Cytochrome b6-f complex subunit 6 (31 aa).

The chain crosses the membrane as a helical span at residues I4–G24.

It belongs to the PetL family. The 4 large subunits of the cytochrome b6-f complex are cytochrome b6, subunit IV (17 kDa polypeptide, PetD), cytochrome f and the Rieske protein, while the 4 small subunits are PetG, PetL, PetM and PetN. The complex functions as a dimer.

It is found in the plastid. The protein localises to the chloroplast thylakoid membrane. Functionally, component of the cytochrome b6-f complex, which mediates electron transfer between photosystem II (PSII) and photosystem I (PSI), cyclic electron flow around PSI, and state transitions. PetL is important for photoautotrophic growth as well as for electron transfer efficiency and stability of the cytochrome b6-f complex. In Solanum tuberosum (Potato), this protein is Cytochrome b6-f complex subunit 6.